A 239-amino-acid chain; its full sequence is Phosphoribosylaminoimidazole-succinocarboxamide synthase (239 aa).

The protein belongs to the SAICAR synthetase family.

It carries out the reaction 5-amino-1-(5-phospho-D-ribosyl)imidazole-4-carboxylate + L-aspartate + ATP = (2S)-2-[5-amino-1-(5-phospho-beta-D-ribosyl)imidazole-4-carboxamido]succinate + ADP + phosphate + 2 H(+). It functions in the pathway purine metabolism; IMP biosynthesis via de novo pathway; 5-amino-1-(5-phospho-D-ribosyl)imidazole-4-carboxamide from 5-amino-1-(5-phospho-D-ribosyl)imidazole-4-carboxylate: step 1/2. In Brevibacillus brevis (strain 47 / JCM 6285 / NBRC 100599), this protein is Phosphoribosylaminoimidazole-succinocarboxamide synthase.